Here is a 149-residue protein sequence, read N- to C-terminus: Arginine regulator (149 aa).

It belongs to the ArgR family.

The protein localises to the cytoplasm. The protein operates within amino-acid degradation; L-arginine degradation via ADI pathway. Functionally, regulates the transcription of the arc operon, involved in arginine catabolism. The chain is Arginine regulator (argR1) from Bacillus cereus (strain ATCC 14579 / DSM 31 / CCUG 7414 / JCM 2152 / NBRC 15305 / NCIMB 9373 / NCTC 2599 / NRRL B-3711).